We begin with the raw amino-acid sequence, 325 residues long: DNA repair and recombination protein RadA (325 aa).

107–114 contributes to the ATP binding site; the sequence is GEFGSGKT.

It belongs to the eukaryotic RecA-like protein family.

Its function is as follows. Involved in DNA repair and in homologous recombination. Binds and assemble on single-stranded DNA to form a nucleoprotein filament. Hydrolyzes ATP in a ssDNA-dependent manner and promotes DNA strand exchange between homologous DNA molecules. This is DNA repair and recombination protein RadA from Methanosarcina barkeri (strain Fusaro / DSM 804).